The sequence spans 94 residues: Aspartyl/glutamyl-tRNA(Asn/Gln) amidotransferase subunit C (94 aa).

The protein belongs to the GatC family. Heterotrimer of A, B and C subunits.

It carries out the reaction L-glutamyl-tRNA(Gln) + L-glutamine + ATP + H2O = L-glutaminyl-tRNA(Gln) + L-glutamate + ADP + phosphate + H(+). The catalysed reaction is L-aspartyl-tRNA(Asn) + L-glutamine + ATP + H2O = L-asparaginyl-tRNA(Asn) + L-glutamate + ADP + phosphate + 2 H(+). In terms of biological role, allows the formation of correctly charged Asn-tRNA(Asn) or Gln-tRNA(Gln) through the transamidation of misacylated Asp-tRNA(Asn) or Glu-tRNA(Gln) in organisms which lack either or both of asparaginyl-tRNA or glutaminyl-tRNA synthetases. The reaction takes place in the presence of glutamine and ATP through an activated phospho-Asp-tRNA(Asn) or phospho-Glu-tRNA(Gln). This is Aspartyl/glutamyl-tRNA(Asn/Gln) amidotransferase subunit C from Desulfatibacillum aliphaticivorans.